The chain runs to 43 residues: Antimicrobial protein PcfHb (43 aa).

In terms of assembly, possible monomer. Expressed in mucus-secreting tissues.

Its subcellular location is the secreted. In terms of biological role, shows antimicrobial activity against M.luteus (MIC=4 uM) and E.coli (MIC=12 uM), as well as against the yeast C.tropicalis (MIC=4 uM). Shows a pro-inflammatory effect, since the topical application of the protein induces an increase of cellular recruitment characterized by an increase in the number of leukocyte rolling. Does not show hemolytic activity on human erythrocytes (at doses up to 100 uM). The chain is Antimicrobial protein PcfHb from Potamotrygon cf. henlei (Freshwater stingray).